The chain runs to 860 residues: Eukaryotic translation initiation factor 3 subunit C (860 aa).

The tract at residues Met-1–Thr-79 is disordered. 2 stretches are compositionally biased toward acidic residues: residues Ser-16–Ala-53 and Asp-67–Asp-76. Positions Phe-598–Glu-772 constitute a PCI domain. Residues Ala-808–Ala-860 form a disordered region. The span at Gly-814–Thr-830 shows a compositional bias: gly residues. Low complexity predominate over residues Ala-831–Gln-847. The span at Gln-848–Ala-860 shows a compositional bias: gly residues.

The protein belongs to the eIF-3 subunit C family. As to quaternary structure, component of the eukaryotic translation initiation factor 3 (eIF-3) complex.

The protein localises to the cytoplasm. Functionally, component of the eukaryotic translation initiation factor 3 (eIF-3) complex, which is involved in protein synthesis of a specialized repertoire of mRNAs and, together with other initiation factors, stimulates binding of mRNA and methionyl-tRNAi to the 40S ribosome. The eIF-3 complex specifically targets and initiates translation of a subset of mRNAs involved in cell proliferation. In Coccidioides immitis (strain RS) (Valley fever fungus), this protein is Eukaryotic translation initiation factor 3 subunit C.